The sequence spans 874 residues: Alanine--tRNA ligase (874 aa).

Zn(2+) is bound by residues His564, His568, Cys665, and His669.

The protein belongs to the class-II aminoacyl-tRNA synthetase family. The cofactor is Zn(2+).

The protein resides in the cytoplasm. The enzyme catalyses tRNA(Ala) + L-alanine + ATP = L-alanyl-tRNA(Ala) + AMP + diphosphate. Its function is as follows. Catalyzes the attachment of alanine to tRNA(Ala) in a two-step reaction: alanine is first activated by ATP to form Ala-AMP and then transferred to the acceptor end of tRNA(Ala). Also edits incorrectly charged Ser-tRNA(Ala) and Gly-tRNA(Ala) via its editing domain. The protein is Alanine--tRNA ligase of Delftia acidovorans (strain DSM 14801 / SPH-1).